The chain runs to 249 residues: Acetylglutamate kinase (249 aa).

Substrate-binding positions include 42-43 (GG), R64, and N155.

This sequence belongs to the acetylglutamate kinase family. ArgB subfamily.

It localises to the cytoplasm. It catalyses the reaction N-acetyl-L-glutamate + ATP = N-acetyl-L-glutamyl 5-phosphate + ADP. Its pathway is amino-acid biosynthesis; L-arginine biosynthesis; N(2)-acetyl-L-ornithine from L-glutamate: step 2/4. Functionally, catalyzes the ATP-dependent phosphorylation of N-acetyl-L-glutamate. This is Acetylglutamate kinase from Endomicrobium trichonymphae.